We begin with the raw amino-acid sequence, 348 residues long: Chaperone protein DnaJ (348 aa).

The region spanning 3–65 (DLYGILGVDH…EQRQRYDRHV (63 aa)) is the J domain. A CR-type zinc finger spans residues 109 to 191 (GGSQVVKIDS…CYGNGSRSAP (83 aa)). Residues cysteine 122, cysteine 125, cysteine 139, cysteine 142, cysteine 165, cysteine 168, cysteine 179, and cysteine 182 each coordinate Zn(2+). CXXCXGXG motif repeat units follow at residues 122-129 (CDVCNGTR), 139-146 (CFDCNGSG), 165-172 (CSKCRGNG), and 179-186 (CRRCYGNG).

Belongs to the DnaJ family. As to quaternary structure, homodimer. Requires Zn(2+) as cofactor.

Its subcellular location is the cytoplasm. Functionally, participates actively in the response to hyperosmotic and heat shock by preventing the aggregation of stress-denatured proteins and by disaggregating proteins, also in an autonomous, DnaK-independent fashion. Unfolded proteins bind initially to DnaJ; upon interaction with the DnaJ-bound protein, DnaK hydrolyzes its bound ATP, resulting in the formation of a stable complex. GrpE releases ADP from DnaK; ATP binding to DnaK triggers the release of the substrate protein, thus completing the reaction cycle. Several rounds of ATP-dependent interactions between DnaJ, DnaK and GrpE are required for fully efficient folding. Also involved, together with DnaK and GrpE, in the DNA replication of plasmids through activation of initiation proteins. The chain is Chaperone protein DnaJ from Tropheryma whipplei (strain TW08/27) (Whipple's bacillus).